Here is a 297-residue protein sequence, read N- to C-terminus: HTH-type transcriptional regulator IlvY (297 aa).

The 58-residue stretch at Met1–Thr58 folds into the HTH lysR-type domain. The segment at residues Phe18–Gln37 is a DNA-binding region (H-T-H motif).

It belongs to the LysR transcriptional regulatory family.

It is found in the cytoplasm. In terms of biological role, this protein activates the transcription of the ilvC gene in the presence of acetolactate or acetohydroxybutyrate. IlvY is also a negative regulator of its own expression. The protein is HTH-type transcriptional regulator IlvY (ilvY) of Escherichia coli (strain K12).